Reading from the N-terminus, the 264-residue chain is Thymidylate synthase (264 aa).

Arginine 21 lines the dUMP pocket. Histidine 51 provides a ligand contact to (6R)-5,10-methylene-5,6,7,8-tetrahydrofolate. Arginine 126–arginine 127 provides a ligand contact to dUMP. Residue cysteine 146 is the Nucleophile of the active site. DUMP is bound by residues arginine 166–aspartate 169, asparagine 177, and histidine 207–tyrosine 209. Aspartate 169 provides a ligand contact to (6R)-5,10-methylene-5,6,7,8-tetrahydrofolate. A (6R)-5,10-methylene-5,6,7,8-tetrahydrofolate-binding site is contributed by alanine 263.

It belongs to the thymidylate synthase family. Bacterial-type ThyA subfamily. Homodimer.

It is found in the cytoplasm. It catalyses the reaction dUMP + (6R)-5,10-methylene-5,6,7,8-tetrahydrofolate = 7,8-dihydrofolate + dTMP. The protein operates within pyrimidine metabolism; dTTP biosynthesis. In terms of biological role, catalyzes the reductive methylation of 2'-deoxyuridine-5'-monophosphate (dUMP) to 2'-deoxythymidine-5'-monophosphate (dTMP) while utilizing 5,10-methylenetetrahydrofolate (mTHF) as the methyl donor and reductant in the reaction, yielding dihydrofolate (DHF) as a by-product. This enzymatic reaction provides an intracellular de novo source of dTMP, an essential precursor for DNA biosynthesis. The chain is Thymidylate synthase from Legionella pneumophila (strain Lens).